The following is a 430-amino-acid chain: Serine--tRNA ligase (430 aa).

Residues 41–60 form a disordered region; sequence QSRTQDLQNERNVRSKSIGK. 236-238 lines the L-serine pocket; the sequence is TAE. Residue 267–269 coordinates ATP; it reads RSE. Position 290 (E290) interacts with L-serine. Position 354–357 (354–357) interacts with ATP; the sequence is EISS. Residue S390 participates in L-serine binding.

This sequence belongs to the class-II aminoacyl-tRNA synthetase family. Type-1 seryl-tRNA synthetase subfamily. Homodimer. The tRNA molecule binds across the dimer.

Its subcellular location is the cytoplasm. It carries out the reaction tRNA(Ser) + L-serine + ATP = L-seryl-tRNA(Ser) + AMP + diphosphate + H(+). The catalysed reaction is tRNA(Sec) + L-serine + ATP = L-seryl-tRNA(Sec) + AMP + diphosphate + H(+). Its pathway is aminoacyl-tRNA biosynthesis; selenocysteinyl-tRNA(Sec) biosynthesis; L-seryl-tRNA(Sec) from L-serine and tRNA(Sec): step 1/1. Catalyzes the attachment of serine to tRNA(Ser). Is also able to aminoacylate tRNA(Sec) with serine, to form the misacylated tRNA L-seryl-tRNA(Sec), which will be further converted into selenocysteinyl-tRNA(Sec). The polypeptide is Serine--tRNA ligase (Alteromonas mediterranea (strain DSM 17117 / CIP 110805 / LMG 28347 / Deep ecotype)).